A 247-amino-acid polypeptide reads, in one-letter code: Large ribosomal subunit protein uL3 (247 aa).

Disordered regions lie at residues 140-164 and 212-247; these read SHRS…KMPG and LPKE…KEGA. Gln151 is subject to N5-methylglutamine. A compositionally biased stretch (basic and acidic residues) spans 232-247; the sequence is DEDKAPADTPAEKEGA.

Belongs to the universal ribosomal protein uL3 family. As to quaternary structure, part of the 50S ribosomal subunit. Forms a cluster with proteins L14 and L19. In terms of processing, methylated by PrmB.

Functionally, one of the primary rRNA binding proteins, it binds directly near the 3'-end of the 23S rRNA, where it nucleates assembly of the 50S subunit. The protein is Large ribosomal subunit protein uL3 of Nitrobacter winogradskyi (strain ATCC 25391 / DSM 10237 / CIP 104748 / NCIMB 11846 / Nb-255).